The chain runs to 568 residues: 2-succinyl-5-enolpyruvyl-6-hydroxy-3-cyclohexene-1-carboxylate synthase (568 aa).

Belongs to the TPP enzyme family. MenD subfamily. Homodimer. It depends on Mg(2+) as a cofactor. Requires Mn(2+) as cofactor. Thiamine diphosphate serves as cofactor.

The enzyme catalyses isochorismate + 2-oxoglutarate + H(+) = 5-enolpyruvoyl-6-hydroxy-2-succinyl-cyclohex-3-ene-1-carboxylate + CO2. It participates in quinol/quinone metabolism; 1,4-dihydroxy-2-naphthoate biosynthesis; 1,4-dihydroxy-2-naphthoate from chorismate: step 2/7. The protein operates within quinol/quinone metabolism; menaquinone biosynthesis. Functionally, catalyzes the thiamine diphosphate-dependent decarboxylation of 2-oxoglutarate and the subsequent addition of the resulting succinic semialdehyde-thiamine pyrophosphate anion to isochorismate to yield 2-succinyl-5-enolpyruvyl-6-hydroxy-3-cyclohexene-1-carboxylate (SEPHCHC). This is 2-succinyl-5-enolpyruvyl-6-hydroxy-3-cyclohexene-1-carboxylate synthase from Histophilus somni (strain 2336) (Haemophilus somnus).